We begin with the raw amino-acid sequence, 68 residues long: MPQLDTSTWFTTILSMFLTLFIIFQLKISKHTYHPNPETTLPMTQKQPTPWETKWTKIYSPLSLPLQS.

The chain crosses the membrane as a helical span at residues 8-24 (TWFTTILSMFLTLFIIF). N6-acetyllysine; alternate is present on Lys-54. An N6-succinyllysine; alternate modification is found at Lys-54. Residue Lys-57 is modified to N6-acetyllysine.

The protein belongs to the ATPase protein 8 family. Component of the ATP synthase complex composed at least of ATP5F1A/subunit alpha, ATP5F1B/subunit beta, ATP5MC1/subunit c (homooctomer), MT-ATP6/subunit a, MT-ATP8/subunit 8, ATP5ME/subunit e, ATP5MF/subunit f, ATP5MG/subunit g, ATP5MK/subunit k, ATP5MJ/subunit j, ATP5F1C/subunit gamma, ATP5F1D/subunit delta, ATP5F1E/subunit epsilon, ATP5PF/subunit F6, ATP5PB/subunit b, ATP5PD/subunit d, ATP5PO/subunit OSCP. ATP synthase complex consists of a soluble F(1) head domain (subunits alpha(3) and beta(3)) - the catalytic core - and a membrane F(0) domain - the membrane proton channel (subunits c, a, 8, e, f, g, k and j). These two domains are linked by a central stalk (subunits gamma, delta, and epsilon) rotating inside the F1 region and a stationary peripheral stalk (subunits F6, b, d, and OSCP). Interacts with PRICKLE3.

The protein resides in the mitochondrion membrane. Subunit 8, of the mitochondrial membrane ATP synthase complex (F(1)F(0) ATP synthase or Complex V) that produces ATP from ADP in the presence of a proton gradient across the membrane which is generated by electron transport complexes of the respiratory chain. ATP synthase complex consist of a soluble F(1) head domain - the catalytic core - and a membrane F(1) domain - the membrane proton channel. These two domains are linked by a central stalk rotating inside the F(1) region and a stationary peripheral stalk. During catalysis, ATP synthesis in the catalytic domain of F(1) is coupled via a rotary mechanism of the central stalk subunits to proton translocation. In vivo, can only synthesize ATP although its ATP hydrolase activity can be activated artificially in vitro. Part of the complex F(0) domain. This is ATP synthase F(0) complex subunit 8 from Hippopotamus amphibius (Hippopotamus).